Here is a 546-residue protein sequence, read N- to C-terminus: Chaperonin GroEL (546 aa).

ATP contacts are provided by residues T29 to P32, K50, D86 to T90, G414, and D495. The tract at residues A526–M546 is disordered. Residues P531–M546 are compositionally biased toward gly residues.

The protein belongs to the chaperonin (HSP60) family. As to quaternary structure, forms a cylinder of 14 subunits composed of two heptameric rings stacked back-to-back. Interacts with the co-chaperonin GroES.

The protein localises to the cytoplasm. It catalyses the reaction ATP + H2O + a folded polypeptide = ADP + phosphate + an unfolded polypeptide.. Functionally, together with its co-chaperonin GroES, plays an essential role in assisting protein folding. The GroEL-GroES system forms a nano-cage that allows encapsulation of the non-native substrate proteins and provides a physical environment optimized to promote and accelerate protein folding. The chain is Chaperonin GroEL from Jannaschia sp. (strain CCS1).